A 327-amino-acid chain; its full sequence is DNA-directed RNA polymerase subunit alpha (327 aa).

An alpha N-terminal domain (alpha-NTD) region spans residues 1–233 (MQNSASEFLK…DQLSIFADLQ (233 aa)). Residues 247–327 (VDPILLRPVD…NWPPAGLEKP (81 aa)) form an alpha C-terminal domain (alpha-CTD) region.

Belongs to the RNA polymerase alpha chain family. As to quaternary structure, homodimer. The RNAP catalytic core consists of 2 alpha, 1 beta, 1 beta' and 1 omega subunit. When a sigma factor is associated with the core the holoenzyme is formed, which can initiate transcription.

The enzyme catalyses RNA(n) + a ribonucleoside 5'-triphosphate = RNA(n+1) + diphosphate. Functionally, DNA-dependent RNA polymerase catalyzes the transcription of DNA into RNA using the four ribonucleoside triphosphates as substrates. The polypeptide is DNA-directed RNA polymerase subunit alpha (Laribacter hongkongensis (strain HLHK9)).